Reading from the N-terminus, the 491-residue chain is MVFGEFFHRPGQDEELVNLNVGGFKQSVDQSTLLRFPHTRLGKLLTCHSEEAILELCDDYSVADKEYYFDRNPSLFRYVLNFYYTGKLHVMEELCVFSFCQEIEYWGINELFIDSCCSSRYQERKEESHEKDWDQKSNDVSTDSSFEESSLFEKELEKFDELRFGQLRKKIWIRMENPAYCLSAKLIAISSLSVVLASIVAMCVHSMSEFQNEDGEVDDPVLEGVEIACIAWFTGELAIRLVAAPSQKKFWKNPLNIIDFVSIIPFYATLAVDTKEEESEDIENMGKVVQILRLMRIFRILKLARHSVGLRSLGATLRHSYHEVGLLLLFLSVGISIFSVLIYSVEKDELASSLTSIPICWWWATISMTTVGYGDTHPVTLAGKIIASTCIICGILVVALPITIIFNKFSKYYQKQKDMDVDQCSEDPPEKCHELPYFNIRDVYAQQVHAFITSLSSIGIVVSDPDSTDASSVEDNEDAYNTASLENCTAK.

Residues 1–182 (MVFGEFFHRP…IRMENPAYCL (182 aa)) are Cytoplasmic-facing. A helical membrane pass occupies residues 183–204 (SAKLIAISSLSVVLASIVAMCV). Topologically, residues 205–220 (HSMSEFQNEDGEVDDP) are extracellular. The helical transmembrane segment at 221 to 243 (VLEGVEIACIAWFTGELAIRLVA) threads the bilayer. Residues 244-254 (APSQKKFWKNP) lie on the Cytoplasmic side of the membrane. Residues 255-275 (LNIIDFVSIIPFYATLAVDTK) form a helical membrane-spanning segment. Residues 276–285 (EEESEDIENM) lie on the Extracellular side of the membrane. Residues 286-306 (GKVVQILRLMRIFRILKLARH) traverse the membrane as a helical; Voltage-sensor segment. Topologically, residues 307 to 321 (SVGLRSLGATLRHSY) are cytoplasmic. The chain crosses the membrane as a helical span at residues 322–343 (HEVGLLLLFLSVGISIFSVLIY). Topologically, residues 344 to 357 (SVEKDELASSLTSI) are extracellular. The segment at residues 358–369 (PICWWWATISMT) is an intramembrane region (helical). The short motif at 370–375 (TVGYGD) is the Selectivity filter element. The stretch at 370–377 (TVGYGDTH) is an intramembrane region. At 378–384 (PVTLAGK) the chain is on the extracellular side. The chain crosses the membrane as a helical span at residues 385–413 (IIASTCIICGILVVALPITIIFNKFSKYY). Topologically, residues 414-491 (QKQKDMDVDQ…TASLENCTAK (78 aa)) are cytoplasmic.

This sequence belongs to the potassium channel family. S (TC 1.A.1.2) subfamily. Kv9.3/KCNS3 sub-subfamily. As to quaternary structure, heterotetramer with KCNB1. Does not form homomultimers. In terms of tissue distribution, expressed in myocytes. Detected in lung, spleen, brain and heart.

It localises to the cell membrane. Potassium channel regulatory subunit that modulates the delayed rectifier potassium channel activity of KCNB1 by namely slowing down the deactivation and inactivation time constants. While it does not form functional channel on its own, it can form functional heterotetrameric channels with KCNB1. This chain is Delayed-rectifier potassium channel regulatory subunit KCNS3, found in Rattus norvegicus (Rat).